The sequence spans 522 residues: Glycerol kinase (522 aa).

Residue threonine 15 participates in substrate binding. Arginine 19 contacts ATP. Residues 89–90 (RE), tyrosine 143, and 255–256 (DQ) each bind substrate. ATP contacts are provided by residues threonine 276, glycine 321, and 430–434 (GATAN).

It belongs to the FGGY kinase family. In terms of tissue distribution, highly expressed in germinating seeds and senescent leaves, and at lower levels in roots, leaves, flowers and siliques.

It is found in the cytoplasm. It localises to the cytosol. It carries out the reaction glycerol + ATP = sn-glycerol 3-phosphate + ADP + H(+). Its pathway is polyol metabolism; glycerol degradation via glycerol kinase pathway; sn-glycerol 3-phosphate from glycerol: step 1/1. Functionally, key enzyme in the regulation of glycerol uptake and metabolism. Required for resistance to nonhost Pseudomonas bacteria and to the pathogenic fungus B.cinerea. The chain is Glycerol kinase (GLPK) from Arabidopsis thaliana (Mouse-ear cress).